Here is a 205-residue protein sequence, read N- to C-terminus: Proteasome subunit beta type-3 (205 aa).

Ser2 carries the post-translational modification N-acetylserine. N6-acetyllysine is present on Lys77.

The protein belongs to the peptidase T1B family. In terms of assembly, the 26S proteasome consists of a 20S proteasome core and two 19S regulatory subunits. The 20S proteasome core is a barrel-shaped complex made of 28 subunits that are arranged in four stacked rings. The two outer rings are each formed by seven alpha subunits, and the two inner rings are formed by seven beta subunits. The proteolytic activity is exerted by three beta-subunits PSMB5, PSMB6 and PSMB7. (Microbial infection) Interacts with HIV-1 TAT protein.

The protein localises to the cytoplasm. Its subcellular location is the nucleus. Non-catalytic component of the 20S core proteasome complex involved in the proteolytic degradation of most intracellular proteins. This complex plays numerous essential roles within the cell by associating with different regulatory particles. Associated with two 19S regulatory particles, forms the 26S proteasome and thus participates in the ATP-dependent degradation of ubiquitinated proteins. The 26S proteasome plays a key role in the maintenance of protein homeostasis by removing misfolded or damaged proteins that could impair cellular functions, and by removing proteins whose functions are no longer required. Associated with the PA200 or PA28, the 20S proteasome mediates ubiquitin-independent protein degradation. This type of proteolysis is required in several pathways including spermatogenesis (20S-PA200 complex) or generation of a subset of MHC class I-presented antigenic peptides (20S-PA28 complex). The sequence is that of Proteasome subunit beta type-3 from Homo sapiens (Human).